A 193-amino-acid polypeptide reads, in one-letter code: Probable DNA-directed RNA polymerase subunit delta (193 aa).

The HTH HARE-type domain maps to 14–81 (LALVEIATAI…GNNEWGLRAW (68 aa)). Composition is skewed to acidic residues over residues 119 to 174 (DDDV…DDNL) and 182 to 193 (DLDDLSDGDIEK). Positions 119–193 (DDDVIDYNDD…DDLSDGDIEK (75 aa)) are disordered.

It belongs to the RpoE family. As to quaternary structure, RNAP is composed of a core of 2 alpha, a beta and a beta' subunits. The core is associated with a delta subunit and one of several sigma factors.

Its function is as follows. Participates in both the initiation and recycling phases of transcription. In the presence of the delta subunit, RNAP displays an increased specificity of transcription, a decreased affinity for nucleic acids, and an increased efficiency of RNA synthesis because of enhanced recycling. The chain is Probable DNA-directed RNA polymerase subunit delta from Leuconostoc citreum (strain KM20).